The chain runs to 383 residues: Xylose/arabinose import ATP-binding protein XacJ (383 aa).

Residues 4 to 235 (IQLTDLTKRF…PNNLFVAEFI (232 aa)) enclose the ABC transporter domain. ATP is bound at residue 36–43 (GPSGCGKS).

This sequence belongs to the ABC transporter superfamily. Carbohydrate uptake transporter-1 (CUT1) (TC 3.A.1.1) family. As to quaternary structure, the complex is composed of two ATP-binding proteins (XacJ and XacK), two transmembrane proteins (XacH and XacI) and a solute-binding protein (XacG).

The protein resides in the cell membrane. The enzyme catalyses D-xylose(out) + ATP + H2O = D-xylose(in) + ADP + phosphate + H(+). It carries out the reaction L-arabinose(out) + ATP + H2O = L-arabinose(in) + ADP + phosphate + H(+). Part of the ABC transporter complex XacGHIJK involved in the uptake of xylose and arabinose. Responsible for energy coupling to the transport system. The sequence is that of Xylose/arabinose import ATP-binding protein XacJ from Haloferax volcanii (strain ATCC 29605 / DSM 3757 / JCM 8879 / NBRC 14742 / NCIMB 2012 / VKM B-1768 / DS2) (Halobacterium volcanii).